A 608-amino-acid chain; its full sequence is Chaperone protein HtpG (608 aa).

Residues 1 to 332 (MQFQTEVNQL…VEDLPLNVSR (332 aa)) are a; substrate-binding. The tract at residues 333-536 (EILQENQILK…KNKPDFAMQQ (204 aa)) is b. The c stretch occupies residues 537–608 (LLKQMGQEQN…LTKIINKAFS (72 aa)).

The protein belongs to the heat shock protein 90 family. Homodimer.

It is found in the cytoplasm. Functionally, molecular chaperone. Has ATPase activity. This chain is Chaperone protein HtpG, found in Campylobacter jejuni subsp. jejuni serotype O:2 (strain ATCC 700819 / NCTC 11168).